A 324-amino-acid chain; its full sequence is tRNA U34 carboxymethyltransferase (324 aa).

Residues lysine 91, tryptophan 105, lysine 110, glycine 130, 152-154 (DPS), 181-182 (IE), methionine 196, tyrosine 200, and arginine 315 contribute to the carboxy-S-adenosyl-L-methionine site.

The protein belongs to the class I-like SAM-binding methyltransferase superfamily. CmoB family. As to quaternary structure, homotetramer.

It catalyses the reaction carboxy-S-adenosyl-L-methionine + 5-hydroxyuridine(34) in tRNA = 5-carboxymethoxyuridine(34) in tRNA + S-adenosyl-L-homocysteine + H(+). In terms of biological role, catalyzes carboxymethyl transfer from carboxy-S-adenosyl-L-methionine (Cx-SAM) to 5-hydroxyuridine (ho5U) to form 5-carboxymethoxyuridine (cmo5U) at position 34 in tRNAs. The polypeptide is tRNA U34 carboxymethyltransferase (Aliivibrio fischeri (strain MJ11) (Vibrio fischeri)).